Reading from the N-terminus, the 152-residue chain is Deoxyuridine 5'-triphosphate nucleotidohydrolase (152 aa).

Substrate contacts are provided by residues 71 to 73 (RSG), Asn84, 88 to 90 (LID), and Met98.

It belongs to the dUTPase family. Requires Mg(2+) as cofactor.

The catalysed reaction is dUTP + H2O = dUMP + diphosphate + H(+). The protein operates within pyrimidine metabolism; dUMP biosynthesis; dUMP from dCTP (dUTP route): step 2/2. This enzyme is involved in nucleotide metabolism: it produces dUMP, the immediate precursor of thymidine nucleotides and it decreases the intracellular concentration of dUTP so that uracil cannot be incorporated into DNA. This is Deoxyuridine 5'-triphosphate nucleotidohydrolase from Shewanella sp. (strain MR-7).